The following is a 178-amino-acid chain: Oligoribonuclease (178 aa).

In terms of domain architecture, Exonuclease spans 7 to 168 (LIWIDLEMTG…DDIRESIAEL (162 aa)). Residue tyrosine 128 is part of the active site.

Belongs to the oligoribonuclease family.

It is found in the cytoplasm. In terms of biological role, 3'-to-5' exoribonuclease specific for small oligoribonucleotides. This chain is Oligoribonuclease, found in Francisella tularensis subsp. tularensis (strain FSC 198).